We begin with the raw amino-acid sequence, 179 residues long: tRNA (cytidine(56)-2'-O)-methyltransferase (179 aa).

Residues Leu82, 110-114 (GAEKV), and 128-135 (VGNQPHSE) each bind S-adenosyl-L-methionine.

The protein belongs to the aTrm56 family. Homodimer.

The protein resides in the cytoplasm. It carries out the reaction cytidine(56) in tRNA + S-adenosyl-L-methionine = 2'-O-methylcytidine(56) in tRNA + S-adenosyl-L-homocysteine + H(+). Functionally, specifically catalyzes the AdoMet-dependent 2'-O-ribose methylation of cytidine at position 56 in tRNAs. This Methanocaldococcus jannaschii (strain ATCC 43067 / DSM 2661 / JAL-1 / JCM 10045 / NBRC 100440) (Methanococcus jannaschii) protein is tRNA (cytidine(56)-2'-O)-methyltransferase.